The sequence spans 125 residues: uncharacterized protein (125 aa).

Its subcellular location is the plastid. This is an uncharacterized protein from Euglena longa (Euglenophycean alga).